We begin with the raw amino-acid sequence, 498 residues long: Putrescine N-hydroxylase (498 aa).

Residues Phe23, Asp43, Lys45, Trp50, His51, and Gln62 each coordinate FAD. NADP(+)-binding residues include Gln62 and Arg104. An FAD-binding site is contributed by Val127. NADP(+) is bound by residues Ser207, Arg231, Tyr275, and Leu309. Asn386, Pro397, and Leu399 together coordinate FAD. The span at 443 to 474 shows a compositional bias: polar residues; sequence LESNTHSAVTPSKTRQGLNPSAKSVQQPSIEP. The disordered stretch occupies residues 443–498; it reads LESNTHSAVTPSKTRQGLNPSAKSVQQPSIEPQTALRIAPTGGNVSALMAPNKEAQ.

The protein belongs to the lysine N(6)-hydroxylase/L-ornithine N(5)-oxygenase family. Requires FAD as cofactor.

It catalyses the reaction putrescine + NADPH + O2 = N-hydroxyputrescine + NADP(+) + H2O. The protein operates within siderophore biosynthesis. Its function is as follows. N-hydroxylating monooxygenase involved in the biosynthesis of the siderophore putrebactin. Catalyzes the N-hydroxylation of the aliphatic diamine putrescine into N-hydroxyputrescine (NHP). In Shewanella oneidensis (strain ATCC 700550 / JCM 31522 / CIP 106686 / LMG 19005 / NCIMB 14063 / MR-1), this protein is Putrescine N-hydroxylase.